The chain runs to 404 residues: Cysteine desulfurase IscS (404 aa).

Pyridoxal 5'-phosphate-binding positions include alanine 75–threonine 76, asparagine 155, glutamine 183, and serine 203–histidine 205. Lysine 206 is modified (N6-(pyridoxal phosphate)lysine). Position 243 (threonine 243) interacts with pyridoxal 5'-phosphate. Cysteine 328 (cysteine persulfide intermediate) is an active-site residue. Cysteine 328 lines the [2Fe-2S] cluster pocket.

This sequence belongs to the class-V pyridoxal-phosphate-dependent aminotransferase family. NifS/IscS subfamily. Homodimer. Forms a heterotetramer with IscU, interacts with other sulfur acceptors. It depends on pyridoxal 5'-phosphate as a cofactor.

The protein localises to the cytoplasm. The enzyme catalyses (sulfur carrier)-H + L-cysteine = (sulfur carrier)-SH + L-alanine. Its pathway is cofactor biosynthesis; iron-sulfur cluster biosynthesis. In terms of biological role, master enzyme that delivers sulfur to a number of partners involved in Fe-S cluster assembly, tRNA modification or cofactor biosynthesis. Catalyzes the removal of elemental sulfur atoms from cysteine to produce alanine. Functions as a sulfur delivery protein for Fe-S cluster synthesis onto IscU, an Fe-S scaffold assembly protein, as well as other S acceptor proteins. In Neisseria meningitidis serogroup C (strain 053442), this protein is Cysteine desulfurase IscS.